Reading from the N-terminus, the 234-residue chain is MAKLTKRMRNIREKVEVTKEYDINEAVALLKELATAKFTESVDVAVNLGIDARKSDQNVRGATVLPHGTGRDIRVAVFTQGANAEAAKEAGADLVGMEDLAELVKKGEMNFDVVVASPDAMRVVGQLGTILGPRGLMPNPKVGTVTPNVAEAVKNAKAGQVRYRNDKNGIIHTTIGKVDFDAAQLKENLEALLVALKKAKPTSAKGTFVKKVSISTTMGAGVSLDQATLNTQTN.

The protein belongs to the universal ribosomal protein uL1 family. As to quaternary structure, part of the 50S ribosomal subunit.

Functionally, binds directly to 23S rRNA. The L1 stalk is quite mobile in the ribosome, and is involved in E site tRNA release. Protein L1 is also a translational repressor protein, it controls the translation of the L11 operon by binding to its mRNA. The polypeptide is Large ribosomal subunit protein uL1 (Aliivibrio fischeri (strain MJ11) (Vibrio fischeri)).